A 493-amino-acid polypeptide reads, in one-letter code: Angiopoietin-related protein 2 (493 aa).

A signal peptide spans 1–22 (MRPLCVTCWWLGLLAAMGAVAG). 2 coiled-coil regions span residues 76–115 (PEVLLENRVHKQELELLNNELLKQKRQIETLQQLVEVDGG) and 152–206 (ALEL…HCQR). N-linked (GlcNAc...) asparagine glycans are attached at residues asparagine 164 and asparagine 192. Residues 269-489 (DKPSGPWRDC…KVVMMIRPNP (221 aa)) enclose the Fibrinogen C-terminal domain. Intrachain disulfides connect cysteine 278–cysteine 307 and cysteine 430–cysteine 443.

N-glycosylated. In terms of tissue distribution, widely expressed in heart, small intestine, spleen and stomach. Also found in lower levels in colon, ovary, adrenal gland, skeletal muscle and in prostate.

It localises to the secreted. Induces sprouting in endothelial cells through an autocrine and paracrine action. In Homo sapiens (Human), this protein is Angiopoietin-related protein 2 (ANGPTL2).